Here is a 267-residue protein sequence, read N- to C-terminus: 3-methyl-2-oxobutanoate hydroxymethyltransferase (267 aa).

2 residues coordinate Mg(2+): Asp46 and Asp85. Residues 46-47 (DS), Asp85, and Lys115 each bind 3-methyl-2-oxobutanoate. Glu117 serves as a coordination point for Mg(2+). Catalysis depends on Glu184, which acts as the Proton acceptor.

It belongs to the PanB family. Homodecamer; pentamer of dimers. It depends on Mg(2+) as a cofactor.

The protein resides in the cytoplasm. The enzyme catalyses 3-methyl-2-oxobutanoate + (6R)-5,10-methylene-5,6,7,8-tetrahydrofolate + H2O = 2-dehydropantoate + (6S)-5,6,7,8-tetrahydrofolate. It participates in cofactor biosynthesis; (R)-pantothenate biosynthesis; (R)-pantoate from 3-methyl-2-oxobutanoate: step 1/2. Catalyzes the reversible reaction in which hydroxymethyl group from 5,10-methylenetetrahydrofolate is transferred onto alpha-ketoisovalerate to form ketopantoate. In Geotalea uraniireducens (strain Rf4) (Geobacter uraniireducens), this protein is 3-methyl-2-oxobutanoate hydroxymethyltransferase.